A 1447-amino-acid chain; its full sequence is Adhesion G protein-coupled receptor L3 (1447 aa).

Positions 1–19 (MWPSQLLIFMMLLAPIIHA) are cleaved as a signal peptide. Topologically, residues 20–862 (FSRAPIPMAV…VKHSDAVHDL (843 aa)) are extracellular. The SUEL-type lectin domain occupies 35–124 (SCESYPIELR…KYLEVQYECV (90 aa)). Intrachain disulfides connect C36-C66, C45-C123, C78-C110, C91-C97, and C135-C317. N93 is a glycosylation site (N-linked (GlcNAc...) asparagine). The region spanning 134-393 (LCPGLLKGVY…VVKYSLDFGP (260 aa)) is the Olfactomedin-like domain. Residues 249-279 (YHDTSPYRWGGKSDIDLAVDENGLWVIYATE) are interaction with FLRT3. 4 residues coordinate Ca(2+): D264, N312, A313, and V367. Residues 426-473 (DISTTGPLGMGSTTTSTTLRTTTLSPGRSTTPSVSGRRNRSTSTPSPA) form a disordered region. Residues 428–458 (STTGPLGMGSTTTSTTLRTTTLSPGRSTTPS) are compositionally biased toward low complexity. N464, N549, N746, N759, N804, and N830 each carry an N-linked (GlcNAc...) asparagine glycan. The 180-residue stretch at 675-854 (DIVRENTDNI…AVLMAHVEVK (180 aa)) folds into the GAIN-B domain. Cystine bridges form between C805–C836 and C824–C838. A GPS region spans residues 805 to 854 (CSFWSYSKRTMTGYWSTQGCRLLTTNKTHTTCSCNHLTNFAVLMAHVEVK). A stachel region spans residues 842–855 (TNFAVLMAHVEVKH). Residues 863-888 (LLDVITWVGILLSLVCLLICIFTFCF) traverse the membrane as a helical segment. The Cytoplasmic segment spans residues 889–896 (FRGLQSDR). The chain crosses the membrane as a helical span at residues 897–918 (NTIHKNLCISLFVAELLFLIGI). The Extracellular portion of the chain corresponds to 919–926 (NRTDQPIA). A helical membrane pass occupies residues 927–950 (CAVFAALLHFFFLAAFTWMFLEGV). Residues C927 and C999 are joined by a disulfide bond. The Cytoplasmic segment spans residues 951-967 (QLYIMLVEVFESEHSRR). Residues 968-990 (KYFYLVGYGMPALIVAVSAAVDY) traverse the membrane as a helical segment. Residues 991–1005 (RSYGTDKVCWLRLDT) lie on the Extracellular side of the membrane. A helical transmembrane segment spans residues 1006–1027 (YFIWSFIGPATLIIMLNVIFLG). The Cytoplasmic portion of the chain corresponds to 1028–1053 (IALYKMFHHTAILKPESGCLDNIKSW). The chain crosses the membrane as a helical span at residues 1054-1073 (VIGAIALLCLLGLTWAFGLM). The Extracellular portion of the chain corresponds to 1074 to 1078 (YINES). The N-linked (GlcNAc...) asparagine glycan is linked to N1076. A helical transmembrane segment spans residues 1079–1104 (TVIMAYLFTIFNSLQGMFIFIFHCVL). Residues 1105-1447 (QKKVRKEYGK…KGPAHLVTSL (343 aa)) are Cytoplasmic-facing. A disordered region spans residues 1123–1147 (GKSTESSIGSGKTSGSRTPGRYSTG). The residue at position 1164 (S1164) is a Phosphoserine. The tract at residues 1423 to 1447 (IVPPNKDGTPPEGSSKGPAHLVTSL) is disordered. The PDZ-binding motif lies at 1442-1447 (HLVTSL).

Belongs to the G-protein coupled receptor 2 family. LN-TM7 subfamily. In terms of assembly, heterodimer of 2 chains generated by proteolytic processing; the large extracellular N-terminal fragment and the membrane-bound C-terminal fragment predominantly remain associated and non-covalently linked. Interacts (via olfactomedin-like domain) with FLRT1 (via extracellular domain). Interacts (via olfactomedin-like domain) with FLRT2 (via extracellular domain). Interacts (via olfactomedin-like domain) with FLRT3 (via extracellular domain); the interaction is direct. Interacts (via extracellular domain) with TENM1. Interacts (via extracellular domain) with TENM2. Interacts (via extracellular domain) with TENM3. Identified in a complex with FLRT3 and UNC5B; does not interact with UNC5B by itself. Identified in a complex with FLRT3 and UNC5D; does not interact with UNC5D by itself. Interacts (via PDZ-binding motif) with SHANK3. Interacts (via PDZ-binding motif) with DLG4. Post-translationally, autoproteolytically processed at the GPS region of the GAIN-B domain; this cleavage modulates receptor activity.

It localises to the cell membrane. The protein localises to the postsynaptic cell membrane. It is found in the cell projection. Its subcellular location is the axon. The protein resides in the cell junction. Forms a heterodimer of 2 chains generated by proteolytic processing that remain associated through non-covalent interactions mediated by the GAIN-B domain. In the inactivated receptor, the Stachel sequence (also named stalk) is embedded in the GAIN-B domain, where it adopts a beta-strand conformation. On activation, the Stachel moves into the 7 transmembrane region and adopts a twisted hook-shaped configuration that forms contacts within the receptor, leading to coupling of a G-alpha protein, which activates signaling. The cleaved GAIN-B and N-terminal domains can then dissociate from the rest of the receptor. Functionally, orphan adhesion G-protein coupled receptor (aGPCR), which mediates synapse specificity. Ligand binding causes a conformation change that triggers signaling via guanine nucleotide-binding proteins (G proteins) and modulates the activity of downstream effectors. ADGRL3 is coupled with different classes of G alpha proteins, such as G(12)/G(13), G(s), G(i) or G(q), depending on the context. Coupling to G(12)/G(13) G proteins, which mediates the activation Rho small GTPases is the most efficient. Following G-protein coupled receptor activation, associates with cell adhesion molecules that are expressed at the surface of adjacent cells to direct synapse specificity. Specifically mediates the establishment of Schaffer-collateral synapses formed by CA3-region axons on CA1-region pyramidal neurons in the hippocampus. Localizes to postsynaptic spines in excitatory synapses in the S.oriens and S.radiatum and interacts with presynaptic cell adhesion molecules FLRT3 and TENM2, promoting synapse formation. Plays a role in the development of glutamatergic synapses in the cortex. Important in determining the connectivity rates between the principal neurons in the cortex. Orphan adhesion G-protein coupled receptor (aGPCR), which mediates synapse specificity. Ligand binding causes a conformation change that triggers signaling via guanine nucleotide-binding proteins (G proteins) and modulates the activity of downstream effectors, such as adenylate cyclase. Isoform 1 is specifically coupled to G(s) G proteins and mediates activation of adenylate cyclase activity. Following G-protein coupled receptor activation, undergoes liquid-liquid phase transition, associates with (1) cell adhesion molecules that are expressed at the surface of adjacent cells, as well as (2) PDZ-containing proteins, such as SHANK3 and DLG4, in the cytoplasm to direct synapse formation. In Homo sapiens (Human), this protein is Adhesion G protein-coupled receptor L3.